The following is a 226-amino-acid chain: Putative pyridoxamine 5'-phosphate oxidase (226 aa).

Leu-16–His-19 is a pyridoxal 5'-phosphate binding site. FMN is bound at residue Arg-72–Leu-75. Lys-77 is a pyridoxal 5'-phosphate binding site. Residues Tyr-87–Thr-88, Arg-93–Lys-94, and Gln-116 contribute to the FMN site. The pyridoxal 5'-phosphate site is built by Tyr-134, Arg-138, and Ser-142. Residues Gln-151 to Ser-152 and Trp-199 contribute to the FMN site. Arg-205–His-207 is a pyridoxal 5'-phosphate binding site. Arg-209 serves as a coordination point for FMN.

It belongs to the pyridoxamine 5'-phosphate oxidase family. Homodimer. It depends on FMN as a cofactor.

It carries out the reaction pyridoxamine 5'-phosphate + O2 + H2O = pyridoxal 5'-phosphate + H2O2 + NH4(+). The enzyme catalyses pyridoxine 5'-phosphate + O2 = pyridoxal 5'-phosphate + H2O2. It functions in the pathway cofactor metabolism; pyridoxal 5'-phosphate salvage; pyridoxal 5'-phosphate from pyridoxamine 5'-phosphate: step 1/1. Its pathway is cofactor metabolism; pyridoxal 5'-phosphate salvage; pyridoxal 5'-phosphate from pyridoxine 5'-phosphate: step 1/1. In terms of biological role, catalyzes the oxidation of either pyridoxine 5'-phosphate (PNP) or pyridoxamine 5'-phosphate (PMP) into pyridoxal 5'-phosphate (PLP). This chain is Putative pyridoxamine 5'-phosphate oxidase, found in Caenorhabditis elegans.